The following is a 188-amino-acid chain: ATP synthase subunit b, chloroplastic (188 aa).

The helical transmembrane segment at 35–57 threads the bilayer; sequence LINLAVVIGVLVYFGKGVLTTLL.

The protein belongs to the ATPase B chain family. F-type ATPases have 2 components, F(1) - the catalytic core - and F(0) - the membrane proton channel. F(1) has five subunits: alpha(3), beta(3), gamma(1), delta(1), epsilon(1). F(0) has four main subunits: a(1), b(1), b'(1) and c(10-14). The alpha and beta chains form an alternating ring which encloses part of the gamma chain. F(1) is attached to F(0) by a central stalk formed by the gamma and epsilon chains, while a peripheral stalk is formed by the delta, b and b' chains.

The protein resides in the plastid. The protein localises to the chloroplast thylakoid membrane. Functionally, f(1)F(0) ATP synthase produces ATP from ADP in the presence of a proton or sodium gradient. F-type ATPases consist of two structural domains, F(1) containing the extramembraneous catalytic core and F(0) containing the membrane proton channel, linked together by a central stalk and a peripheral stalk. During catalysis, ATP synthesis in the catalytic domain of F(1) is coupled via a rotary mechanism of the central stalk subunits to proton translocation. Its function is as follows. Component of the F(0) channel, it forms part of the peripheral stalk, linking F(1) to F(0). The sequence is that of ATP synthase subunit b, chloroplastic from Zygnema circumcarinatum (Green alga).